Here is a 489-residue protein sequence, read N- to C-terminus: mRNA cleavage and polyadenylation factor CLP1 (489 aa).

ATP is bound by residues Glu-28 and 152 to 157 (YSGKTT).

Belongs to the Clp1 family. Clp1 subfamily. Component of a pre-mRNA cleavage factor complex. Interacts directly with PCF11.

It localises to the nucleus. Functionally, required for endonucleolytic cleavage during polyadenylation-dependent pre-mRNA 3'-end formation. This Candida albicans (strain SC5314 / ATCC MYA-2876) (Yeast) protein is mRNA cleavage and polyadenylation factor CLP1.